The following is a 491-amino-acid chain: Ketol-acid reductoisomerase (NADP(+)) (491 aa).

One can recognise a KARI N-terminal Rossmann domain in the interval 15 to 208 (AQLGKCRFMG…GGHRAGVLES (194 aa)). Residues 45 to 48 (CGAQ), Arg-68, Arg-76, Ser-78, and 108 to 110 (DKQ) contribute to the NADP(+) site. His-132 is a catalytic residue. Gly-158 serves as a coordination point for NADP(+). 2 KARI C-terminal knotted domains span residues 209–344 (SFVA…TAPQ) and 345–484 (YEGK…MTDM). 4 residues coordinate Mg(2+): Asp-217, Glu-221, Glu-389, and Glu-393. A substrate-binding site is contributed by Ser-414.

This sequence belongs to the ketol-acid reductoisomerase family. Mg(2+) is required as a cofactor.

It catalyses the reaction (2R)-2,3-dihydroxy-3-methylbutanoate + NADP(+) = (2S)-2-acetolactate + NADPH + H(+). It carries out the reaction (2R,3R)-2,3-dihydroxy-3-methylpentanoate + NADP(+) = (S)-2-ethyl-2-hydroxy-3-oxobutanoate + NADPH + H(+). It functions in the pathway amino-acid biosynthesis; L-isoleucine biosynthesis; L-isoleucine from 2-oxobutanoate: step 2/4. Its pathway is amino-acid biosynthesis; L-valine biosynthesis; L-valine from pyruvate: step 2/4. Functionally, involved in the biosynthesis of branched-chain amino acids (BCAA). Catalyzes an alkyl-migration followed by a ketol-acid reduction of (S)-2-acetolactate (S2AL) to yield (R)-2,3-dihydroxy-isovalerate. In the isomerase reaction, S2AL is rearranged via a Mg-dependent methyl migration to produce 3-hydroxy-3-methyl-2-ketobutyrate (HMKB). In the reductase reaction, this 2-ketoacid undergoes a metal-dependent reduction by NADPH to yield (R)-2,3-dihydroxy-isovalerate. The sequence is that of Ketol-acid reductoisomerase (NADP(+)) from Escherichia coli (strain 55989 / EAEC).